The sequence spans 324 residues: MKLDAVTFGESMAMFYANEYGGLHEVSTFSKGLAGAESNVACGLARLGFRMGWMSKVGNDQLGTFILQELKKEGVDVSRVIRSQDENPTGLLLKSKVKEGDPQVTYYRKNSAASTLTTAEYPRDYFQCAGHLHVTGIPPALSAEMKDFTYHVMNDMRNAGKTISFDPNVRPSLWPDQATMVHTINDLAGLADWFFPGIAEGELLTGEKTPEGIADYYLKKGASFVAIKLGKEGAYFKTGTSEGFLEGCRVDRVVDTVGAGDGFAVGVISGILDGLSYKDAVQRGNAIGALQVQAPGDMDGLPTREKLASFLSAQRTVHQKKGDY.

Substrate is bound by residues 35–39 (GAESN), 106–108 (YYR), and Arg-170. ATP contacts are provided by residues 168–170 (NVR), 228–233 (KLGKEG), and 258–261 (GAGD). Substrate contacts are provided by Asp-261 and Asp-297. Asp-261 (proton acceptor) is an active-site residue.

The protein belongs to the carbohydrate kinase PfkB family.

It carries out the reaction 2-dehydro-3-deoxy-D-gluconate + ATP = 2-dehydro-3-deoxy-6-phospho-D-gluconate + ADP + H(+). It participates in carbohydrate acid metabolism; 2-dehydro-3-deoxy-D-gluconate degradation; D-glyceraldehyde 3-phosphate and pyruvate from 2-dehydro-3-deoxy-D-gluconate: step 1/2. Functionally, catalyzes the phosphorylation of 2-keto-3-deoxygluconate (KDG) to produce 2-keto-3-deoxy-6-phosphogluconate (KDPG). This Bacillus subtilis (strain 168) protein is 2-dehydro-3-deoxygluconokinase (kdgK).